Reading from the N-terminus, the 493-residue chain is Cytochrome P450 monooxygenase olcG (493 aa).

The chain crosses the membrane as a helical span at residues 15 to 35 (GILATGALVIFVALFLATFQF). Heme is bound at residue Cys-429.

The protein belongs to the cytochrome P450 family. Requires heme as cofactor.

It localises to the membrane. It participates in secondary metabolite biosynthesis; terpenoid biosynthesis. In terms of biological role, cytochrome P450 monooxygenase; part of the gene cluster that mediates the biosynthesis of 15-deoxyoxalicine B. The first step of the pathway is the synthesis of nicotinyl-CoA from nicotinic acid by the nicotinic acid-CoA ligase olcI. Nicotinyl-CoA is then a substrate of polyketide synthase olcA to produce 4-hydroxy-6-(3-pyridinyl)-2H-pyran-2-one (HPPO) which is further prenylated by the polyprenyl transferase olcH to yield geranylgeranyl-HPPO. Geranylgeranyl pyrophosphate is provided by the cluster-specific geranylgeranyl pyrophosphate synthase olcC. The FAD-dependent monooxygenase olcE catalyzes the epoxidation of geranylgeranyl-HPPO and the terpene cyclase olcD catalyzes the cyclization of the terpenoid component, resulting in the formation of the tricyclic terpene moiety seen in predecaturin E. The cytochrome P450 monooxygenase then catalyzes the allylic oxidation of predecaturin E, which is followed by spirocylization with concomitant loss of one molecule of water to form decaturin E. Decaturin E is the substrate of the cytochrome P450 monooxygenase olcJ which hydroxylates it at the C-29 position to form decaturin F. The short-chain dehydrogenase/reductase olcF may catalyze the oxidation of decaturin F to generate the 29-hydroxyl-27-one intermediate, and subsequent hemiacetal formation probably leads to the formation of decaturin C. The dioxygenase olcK may be a peroxisomal enzyme that catalyzes the hydroxylation of decaturin C into decaturin A once decaturin C is shuttled into the peroxisome by the MFS transporter olcL. Finally the cytochrome P450 monooxygenase olcB catalyzes the oxidative rearrangement to yield 15-deoxyoxalicine B. In the absence of olcJ, decaturin E may be shunted to a pathway in which it is oxidized to a ketone, possibly by olcF, to form decaturin D, which undergoes further allylic oxidation to yield decaturin G. Moreover, in the absence of oclK or oclL, oclB can convert decaturin C into 15-deoxyoxalicine A. This Penicillium canescens protein is Cytochrome P450 monooxygenase olcG.